The sequence spans 394 residues: uncharacterized protein (394 aa).

Ser-117 and Ser-121 each carry phosphoserine. 3 disordered regions span residues Asp-177–Phe-295, Lys-315–Ser-347, and Ser-370–Val-394. The segment covering Ser-178–Glu-190 has biased composition (acidic residues). 2 stretches are compositionally biased toward polar residues: residues Ser-191 to Tyr-207 and Glu-216 to Ile-230. 2 stretches are compositionally biased toward acidic residues: residues Ser-231–Asp-263 and Ile-284–Phe-295. Positions Ser-370–Ser-379 are enriched in polar residues. Ser-379 is subject to Phosphoserine.

The protein resides in the nucleus. This is an uncharacterized protein from Schizosaccharomyces pombe (strain 972 / ATCC 24843) (Fission yeast).